The following is a 165-amino-acid chain: 3-isopropylmalate dehydratase small subunit (165 aa).

Belongs to the LeuD family. LeuD type 2 subfamily. Heterodimer of LeuC and LeuD.

The enzyme catalyses (2R,3S)-3-isopropylmalate = (2S)-2-isopropylmalate. The protein operates within amino-acid biosynthesis; L-leucine biosynthesis; L-leucine from 3-methyl-2-oxobutanoate: step 2/4. In terms of biological role, catalyzes the isomerization between 2-isopropylmalate and 3-isopropylmalate, via the formation of 2-isopropylmaleate. The polypeptide is 3-isopropylmalate dehydratase small subunit (Hydrogenobaculum sp. (strain Y04AAS1)).